The following is a 116-amino-acid chain: MLFKQAILVATTLTDLAVATPVVDVRRRTDPASSCSTGTLNCCNSSGTVEDKTIAGLLGILNIVVSDITALVGITCTPITVVGAGGTSCTSQTLCCDNNNFSGLITLGCIPININL.

The first 19 residues, 1–19, serve as a signal peptide directing secretion; it reads MLFKQAILVATTLTDLAVA. Disulfide bonds link Cys35/Cys95, Cys42/Cys89, Cys43/Cys76, and Cys96/Cys109. 2 N-linked (GlcNAc...) asparagine glycosylation sites follow: Asn44 and Asn100.

This sequence belongs to the fungal hydrophobin family. As to quaternary structure, self-assembles to form functional amyloid fibrils called rodlets. Self-assembly into fibrillar rodlets occurs spontaneously at hydrophobic:hydrophilic interfaces and the rodlets further associate laterally to form amphipathic monolayers.

Its subcellular location is the secreted. The protein localises to the cell wall. Its function is as follows. Aerial growth, conidiation, and dispersal of filamentous fungi in the environment rely upon a capability of their secreting small amphipathic proteins called hydrophobins (HPBs) with low sequence identity. Class I can self-assemble into an outermost layer of rodlet bundles on aerial cell surfaces, conferring cellular hydrophobicity that supports fungal growth, development and dispersal; whereas Class II form highly ordered films at water-air interfaces through intermolecular interactions but contribute nothing to the rodlet structure. The polypeptide is Class I hydrophobin 1 (Pleurotus ostreatus (Oyster mushroom)).